The primary structure comprises 545 residues: Chaperonin GroEL 5 (545 aa).

Residues 30-33 (TLGP), K51, 87-91 (DGTTT), G415, and D495 contribute to the ATP site.

Belongs to the chaperonin (HSP60) family. Forms a cylinder of 14 subunits composed of two heptameric rings stacked back-to-back. Interacts with the co-chaperonin GroES.

It localises to the cytoplasm. It catalyses the reaction ATP + H2O + a folded polypeptide = ADP + phosphate + an unfolded polypeptide.. Its function is as follows. Together with its co-chaperonin GroES, plays an essential role in assisting protein folding. The GroEL-GroES system forms a nano-cage that allows encapsulation of the non-native substrate proteins and provides a physical environment optimized to promote and accelerate protein folding. This is Chaperonin GroEL 5 from Sinorhizobium medicae (strain WSM419) (Ensifer medicae).